A 265-amino-acid polypeptide reads, in one-letter code: MAVESAAVGVFDSGVGGLSVLREIRARLPSESLLYVADNAHVPYGEKSAEYIRERCERIGDFLLEQGAKALVLACNTATAAAAAELRERYPQVPLVAMEPAVKPAAAATRNGRVGVLATTGTLKSARFAALLDRFASDVQVFTQPCPGLVERIEAGDLYGPQTRALLERLLAPILEQGCDTLILGCTHYPFVKPLLAELIPAEMAVIDTGAAVARQLERVLSARALLASGQAATPRFWTSALPEEMERILPILWGSPESVGKLVV.

Substrate contacts are provided by residues 12–13 (DS) and 44–45 (YG). Cysteine 75 acts as the Proton donor/acceptor in catalysis. 76–77 (NT) is a binding site for substrate. Cysteine 186 (proton donor/acceptor) is an active-site residue. Substrate is bound at residue 187–188 (TH).

Belongs to the aspartate/glutamate racemases family.

The enzyme catalyses L-glutamate = D-glutamate. Its pathway is cell wall biogenesis; peptidoglycan biosynthesis. Provides the (R)-glutamate required for cell wall biosynthesis. The polypeptide is Glutamate racemase (Pseudomonas aeruginosa (strain ATCC 15692 / DSM 22644 / CIP 104116 / JCM 14847 / LMG 12228 / 1C / PRS 101 / PAO1)).